Reading from the N-terminus, the 316-residue chain is Glycine--tRNA ligase alpha subunit (316 aa).

The protein belongs to the class-II aminoacyl-tRNA synthetase family. In terms of assembly, tetramer of two alpha and two beta subunits.

It is found in the cytoplasm. It carries out the reaction tRNA(Gly) + glycine + ATP = glycyl-tRNA(Gly) + AMP + diphosphate. This chain is Glycine--tRNA ligase alpha subunit, found in Paracoccus denitrificans (strain Pd 1222).